Consider the following 375-residue polypeptide: Putative actin-26 (375 aa).

This sequence belongs to the actin family.

It localises to the cytoplasm. The protein localises to the cytoskeleton. The catalysed reaction is ATP + H2O = ADP + phosphate + H(+). Actins are highly conserved proteins that are involved in various types of cell motility and are ubiquitously expressed in all eukaryotic cells. Multiple isoforms are involved in various cellular functions such as cytoskeleton structure, cell mobility, chromosome movement and muscle contraction. This Dictyostelium discoideum (Social amoeba) protein is Putative actin-26 (act26).